We begin with the raw amino-acid sequence, 868 residues long: Translation initiation factor IF-2 (868 aa).

2 disordered regions span residues 49–72 and 92–276; these read LSKQHGSAAEPTRMTLKRKTTSTL and KRSD…EHLK. The segment covering 92-240 has biased composition (basic and acidic residues); the sequence is KRSDIEEQQR…KKAEAEEVHL (149 aa). Residues 368-537 form the tr-type G domain; it reads SRAPVVTIMG…VLQSELLDLQ (170 aa). The interval 377-384 is G1; that stretch reads GHVDHGKT. A GTP-binding site is contributed by 377–384; the sequence is GHVDHGKT. Positions 402-406 are G2; it reads GITQH. Residues 423-426 are G3; that stretch reads DTPG. GTP contacts are provided by residues 423-427 and 477-480; these read DTPGH and NKMD. The G4 stretch occupies residues 477 to 480; the sequence is NKMD. The interval 513 to 515 is G5; sequence SAK.

The protein belongs to the TRAFAC class translation factor GTPase superfamily. Classic translation factor GTPase family. IF-2 subfamily.

The protein localises to the cytoplasm. Functionally, one of the essential components for the initiation of protein synthesis. Protects formylmethionyl-tRNA from spontaneous hydrolysis and promotes its binding to the 30S ribosomal subunits. Also involved in the hydrolysis of GTP during the formation of the 70S ribosomal complex. The protein is Translation initiation factor IF-2 of Alteromonas mediterranea (strain DSM 17117 / CIP 110805 / LMG 28347 / Deep ecotype).